Here is a 246-residue protein sequence, read N- to C-terminus: Eukaryotic translation initiation factor 6 (246 aa).

Phosphoserine; by CK1 is present on residues Ser174 and Ser175.

It belongs to the eIF-6 family. In terms of assembly, monomer. Associates with the 60S ribosomal subunit. In terms of processing, phosphorylation at Ser-174 and Ser-175 promotes nuclear export.

The protein resides in the cytoplasm. The protein localises to the nucleus. Its subcellular location is the nucleolus. Its function is as follows. Binds to the 60S ribosomal subunit and prevents its association with the 40S ribosomal subunit to form the 80S initiation complex in the cytoplasm. Is also involved in ribosome biogenesis. Associates with pre-60S subunits in the nucleus and is involved in its nuclear export. The sequence is that of Eukaryotic translation initiation factor 6 (tif-6) from Neurospora crassa (strain ATCC 24698 / 74-OR23-1A / CBS 708.71 / DSM 1257 / FGSC 987).